We begin with the raw amino-acid sequence, 243 residues long: Ribonuclease PH (243 aa).

Residues arginine 84 and 122 to 124 (GTR) contribute to the phosphate site.

It belongs to the RNase PH family. In terms of assembly, homohexameric ring arranged as a trimer of dimers.

The enzyme catalyses tRNA(n+1) + phosphate = tRNA(n) + a ribonucleoside 5'-diphosphate. Its function is as follows. Phosphorolytic 3'-5' exoribonuclease that plays an important role in tRNA 3'-end maturation. Removes nucleotide residues following the 3'-CCA terminus of tRNAs; can also add nucleotides to the ends of RNA molecules by using nucleoside diphosphates as substrates, but this may not be physiologically important. Probably plays a role in initiation of 16S rRNA degradation (leading to ribosome degradation) during starvation. The polypeptide is Ribonuclease PH (Bdellovibrio bacteriovorus (strain ATCC 15356 / DSM 50701 / NCIMB 9529 / HD100)).